We begin with the raw amino-acid sequence, 543 residues long: uncharacterized protein (543 aa).

Residues asparagine 203–glutamate 460 form the Radical SAM core domain. The TRAM domain maps to valine 470–arginine 534.

This is an uncharacterized protein from Methanocaldococcus jannaschii (strain ATCC 43067 / DSM 2661 / JAL-1 / JCM 10045 / NBRC 100440) (Methanococcus jannaschii).